The following is a 431-amino-acid chain: Venom metalloproteinase 1 (431 aa).

An N-terminal signal peptide occupies residues 1–22 (MDLFILTRFILFLSFFMKSIHC). N-linked (GlcNAc...) asparagine glycans are attached at residues Asn64, Asn113, Asn148, and Asn187. Positions 228–428 (DLLMKTSRRL…TSAACLKDTY (201 aa)) constitute a Peptidase M12B domain. Cystine bridges form between Cys340–Cys423 and Cys379–Cys407. A Zn(2+)-binding site is contributed by His363. The active site involves Glu364. Positions 367 and 373 each coordinate Zn(2+). N-linked (GlcNAc...) asparagine glycosylation is present at Asn414.

The protein in the C-terminal section; belongs to the venom metalloproteinase (M12B) family. As to quaternary structure, monomer. The cofactor is Zn(2+). Expressed by the venom gland.

It is found in the secreted. With respect to regulation, the gelatinase activity is inhibited by EDTA. In terms of biological role, the recombinant protein has gelatinase activity. In vivo, injection of this recombinant into fifth instar L.oleracea (host) larvae results in partial insect mortality associated with the molt to sixth instar, with surviving insects showing retarded development and growth. This Eulophus pennicornis (Parasitoid wasp) protein is Venom metalloproteinase 1.